A 329-amino-acid polypeptide reads, in one-letter code: Intradiol ring-cleavage dioxygenase hqdA (329 aa).

4 residues coordinate Fe cation: tyrosine 167, tyrosine 201, histidine 225, and histidine 227.

This sequence belongs to the intradiol ring-cleavage dioxygenase family. As to quaternary structure, homodimer. It depends on Fe(3+) as a cofactor.

The enzyme catalyses catechol + O2 = cis,cis-muconate + 2 H(+). It carries out the reaction benzene-1,2,4-triol + O2 = maleylacetate + 2 H(+). Its function is as follows. Intradiol ring-cleavage dioxygenase involved in an alternative pathway to the protocatechuic acid pathway since it is active on hydroxyquinol and catechol but not on protocatechuic acid. In Aspergillus niger (strain ATCC MYA-4892 / CBS 513.88 / FGSC A1513), this protein is Intradiol ring-cleavage dioxygenase hqdA.